Here is a 577-residue protein sequence, read N- to C-terminus: Arginine--tRNA ligase (577 aa).

Positions 122-132 (PNVAKEMHVGH) match the 'HIGH' region motif.

Belongs to the class-I aminoacyl-tRNA synthetase family. Monomer.

It is found in the cytoplasm. It catalyses the reaction tRNA(Arg) + L-arginine + ATP = L-arginyl-tRNA(Arg) + AMP + diphosphate. The sequence is that of Arginine--tRNA ligase from Salmonella choleraesuis (strain SC-B67).